A 668-amino-acid chain; its full sequence is Hemocyanin subunit D (668 aa).

The first 22 residues, 1-22 (MDTRVLRLTLALVALSGVLADS), serve as a signal peptide directing secretion. Histidine 206, histidine 210, and histidine 236 together coordinate Cu cation. Asparagine 322 carries N-linked (GlcNAc...) asparagine glycosylation. Histidine 357, histidine 361, and histidine 397 together coordinate Cu cation. A disulfide bridge links cysteine 567 with cysteine 614.

Belongs to the tyrosinase family. Hemocyanin subfamily. As to quaternary structure, 36-chain polymer consisting of 6 hexamers, each of which includes 4 different chains, A, B, C and D. In terms of tissue distribution, hemolymph.

It localises to the secreted. Its subcellular location is the extracellular space. Hemocyanins are copper-containing oxygen carriers occurring freely dissolved in the hemolymph of many mollusks and arthropods. The polypeptide is Hemocyanin subunit D (HCD) (Scutigera coleoptrata (House centipede)).